A 396-amino-acid chain; its full sequence is Ribosomal RNA large subunit methyltransferase I (396 aa).

A PUA domain is found at 2-81 (TVSIYLAKGR…EAIDKDFFVR (80 aa)).

It belongs to the methyltransferase superfamily. RlmI family.

It localises to the cytoplasm. It carries out the reaction cytidine(1962) in 23S rRNA + S-adenosyl-L-methionine = 5-methylcytidine(1962) in 23S rRNA + S-adenosyl-L-homocysteine + H(+). Specifically methylates the cytosine at position 1962 (m5C1962) of 23S rRNA. The sequence is that of Ribosomal RNA large subunit methyltransferase I from Aliivibrio fischeri (strain MJ11) (Vibrio fischeri).